Reading from the N-terminus, the 434-residue chain is Putative D-alanyl-D-alanine carboxypeptidase (434 aa).

A helical; Signal-anchor transmembrane segment spans residues 7–25 (YLSLLAVSCSVSAAKYPVL).

This sequence belongs to the peptidase S12 family. YfeW subfamily.

The protein localises to the cell inner membrane. The catalysed reaction is Preferential cleavage: (Ac)2-L-Lys-D-Ala-|-D-Ala. Also transpeptidation of peptidyl-alanyl moieties that are N-acyl substituents of D-alanine.. The polypeptide is Putative D-alanyl-D-alanine carboxypeptidase (Escherichia coli O157:H7).